The sequence spans 60 residues: Cytotoxin 1 (60 aa).

Cystine bridges form between Cys-3–Cys-21, Cys-14–Cys-38, Cys-42–Cys-53, and Cys-54–Cys-59.

Belongs to the three-finger toxin family. Short-chain subfamily. Type IA cytotoxin sub-subfamily. Monomer in solution; Homodimer and oligomer in the presence of negatively charged lipids forming a pore with a size ranging between 20 and 30 Angstroms. As to expression, expressed by the venom gland.

The protein localises to the secreted. It is found in the target cell membrane. Shows cytolytic activity on many different cells by forming pore in lipid membranes. In vivo, increases heart rate or kills the animal by cardiac arrest. In addition, it binds to heparin with high affinity, interacts with Kv channel-interacting protein 1 (KCNIP1) in a calcium-independent manner, and binds to integrin alpha-V/beta-3 (ITGAV/ITGB3) with moderate affinity. This Naja naja (Indian cobra) protein is Cytotoxin 1.